Consider the following 225-residue polypeptide: Ribose-5-phosphate isomerase A (225 aa).

Substrate contacts are provided by residues 33–36, 84–87, and 96–99; these read TGST, DGAD, and KGGG. Glutamate 105 serves as the catalytic Proton acceptor. Position 123 (lysine 123) interacts with substrate.

It belongs to the ribose 5-phosphate isomerase family. In terms of assembly, homodimer.

It catalyses the reaction aldehydo-D-ribose 5-phosphate = D-ribulose 5-phosphate. It functions in the pathway carbohydrate degradation; pentose phosphate pathway; D-ribose 5-phosphate from D-ribulose 5-phosphate (non-oxidative stage): step 1/1. In terms of biological role, catalyzes the reversible conversion of ribose-5-phosphate to ribulose 5-phosphate. In Halobacterium salinarum (strain ATCC 29341 / DSM 671 / R1), this protein is Ribose-5-phosphate isomerase A.